The following is a 351-amino-acid chain: SH3 domain-containing protein 3 (351 aa).

Coiled coils occupy residues 1-21 (MDAF…QQLA) and 193-213 (LQLA…LGKE). The 237-residue stretch at 31–267 (YESSDVMVID…MVTEKQHKES (237 aa)) folds into the BAR domain. Residues 281–340 (TSYFLAEVIHPFSAASEKELDLDKGDYIVVRKVSQTGWAEGECKGKAGWFPMAYIEKRQR) enclose the SH3 domain.

As to quaternary structure, interacts with FREE1. Interacts (via SH3 domain) with DRP2A/ADL6. Binds to SH3P2. Detected in all tissues except seedlings.

It is found in the cytoplasmic vesicle. Its subcellular location is the clathrin-coated vesicle. Functionally, may be involved in the recruitment of DRP2A to the accessory protein complex and in the negative regulation of its GTPase activity. This is SH3 domain-containing protein 3 from Arabidopsis thaliana (Mouse-ear cress).